We begin with the raw amino-acid sequence, 284 residues long: Efem/EfeO family lipoprotein (284 aa).

An N-terminal signal peptide occupies residues 1-17 (MKKLTTLLLASTLLIAA). Cys-18 carries the N-palmitoyl cysteine lipid modification. Cys-18 carries S-diacylglycerol cysteine lipidation.

The protein belongs to the EfeM/EfeO family.

It localises to the cell membrane. The sequence is that of Efem/EfeO family lipoprotein from Staphylococcus aureus (strain MRSA252).